Consider the following 2233-residue polypeptide: Acetyl-CoA carboxylase (2233 aa).

At Ser2 the chain carries N-acetylserine. Ser2 is modified (phosphoserine). The Biotin carboxylation domain maps to 58-567; it reads VISKILIANN…TTGWLDDLIT (510 aa). Positions 216–408 constitute an ATP-grasp domain; that stretch reads KTGLVSVDDD…LPAAQLQIAM (193 aa). An ATP-binding site is contributed by 256–261; that stretch reads GGGGKG. Mn(2+)-binding residues include Glu365, Glu379, and Asn381. Arg383 is an active-site residue. The region spanning 694-768 is the Biotinyl-binding domain; sequence LEVENDPTQL…VAGDIMAIMT (75 aa). At Lys735 the chain carries N6-biotinyllysine. A phosphoserine mark is found at Ser790, Ser1148, Ser1157, and Ser1162. The CoA carboxyltransferase N-terminal domain occupies 1486–1822; that stretch reads PYPVKEWLQP…KRNMPVPILE (337 aa). Residues 1486–2141 are carboxyltransferase; it reads PYPVKEWLQP…EEYLIKRLSH (656 aa). Position 1627–1629 (1627–1629) interacts with acetyl-CoA; it reads ARI. Arg1731 is a CoA binding site. A CoA carboxyltransferase C-terminal domain is found at 1826–2141; the sequence is TWDRPVDFTP…EEYLIKRLSH (316 aa). An acetyl-CoA-binding site is contributed by Gly1998. 2 residues coordinate CoA: Lys2034 and Arg2036.

In terms of assembly, homodimer. Requires biotin as cofactor. Mn(2+) is required as a cofactor.

It localises to the cytoplasm. The protein localises to the endoplasmic reticulum membrane. The catalysed reaction is hydrogencarbonate + acetyl-CoA + ATP = malonyl-CoA + ADP + phosphate + H(+). It catalyses the reaction N(6)-biotinyl-L-lysyl-[protein] + hydrogencarbonate + ATP = N(6)-carboxybiotinyl-L-lysyl-[protein] + ADP + phosphate + H(+). Its pathway is lipid metabolism; malonyl-CoA biosynthesis; malonyl-CoA from acetyl-CoA: step 1/1. By phosphorylation. The catalytic activity is inhibited by soraphen A, a polyketide isolated from the myxobacterium Sorangium cellulosum and a potent inhibitor of fungal growth. Carries out three functions: biotin carboxyl carrier protein, biotin carboxylase and carboxyltransferase. Involved in the synthesis of very-long-chain fatty acid synthesis which is required to maintain a functional nuclear envelope. Required for acylation and vacuolar membrane association of VAC8 which is necessary to maintain a normal morphology of the vacuole. The polypeptide is Acetyl-CoA carboxylase (ACC1) (Saccharomyces cerevisiae (strain ATCC 204508 / S288c) (Baker's yeast)).